The sequence spans 434 residues: Glutamate-1-semialdehyde 2,1-aminomutase 1 (434 aa).

Position 270 is an N6-(pyridoxal phosphate)lysine (Lys-270).

This sequence belongs to the class-III pyridoxal-phosphate-dependent aminotransferase family. HemL subfamily. In terms of assembly, homodimer. Pyridoxal 5'-phosphate is required as a cofactor.

Its subcellular location is the cytoplasm. The enzyme catalyses (S)-4-amino-5-oxopentanoate = 5-aminolevulinate. It functions in the pathway porphyrin-containing compound metabolism; protoporphyrin-IX biosynthesis; 5-aminolevulinate from L-glutamyl-tRNA(Glu): step 2/2. This Bacillus cereus (strain ATCC 10987 / NRS 248) protein is Glutamate-1-semialdehyde 2,1-aminomutase 1.